The following is a 384-amino-acid chain: Spermidine/putrescine import ATP-binding protein PotA (384 aa).

The ABC transporter domain occupies 6–238 (ITFNNVSKTF…PINHFVANFI (233 aa)). An ATP-binding site is contributed by 40–47 (GASGSGKS).

Belongs to the ABC transporter superfamily. Spermidine/putrescine importer (TC 3.A.1.11.1) family. The complex is composed of two ATP-binding proteins (PotA), two transmembrane proteins (PotB and PotC) and a solute-binding protein (PotD).

The protein localises to the cell membrane. The enzyme catalyses ATP + H2O + polyamine-[polyamine-binding protein]Side 1 = ADP + phosphate + polyamineSide 2 + [polyamine-binding protein]Side 1.. In terms of biological role, part of the ABC transporter complex PotABCD involved in spermidine/putrescine import. Responsible for energy coupling to the transport system. The polypeptide is Spermidine/putrescine import ATP-binding protein PotA (Streptococcus pyogenes serotype M6 (strain ATCC BAA-946 / MGAS10394)).